The chain runs to 422 residues: UDP-N-acetyl-D-glucosamine 6-dehydrogenase (422 aa).

Residues Val14, Asp32, Arg37, Thr83, and Thr118 each coordinate NAD(+). Cys258 serves as the catalytic Nucleophile. An NAD(+)-binding site is contributed by Arg329.

It belongs to the UDP-glucose/GDP-mannose dehydrogenase family.

It catalyses the reaction UDP-N-acetyl-alpha-D-glucosamine + 2 NAD(+) + H2O = UDP-2-acetamido-2-deoxy-alpha-D-glucuronate + 2 NADH + 3 H(+). It functions in the pathway bacterial outer membrane biogenesis; LPS O-antigen biosynthesis. Its activity is regulated as follows. Requires either potassium or ammonium-containing salts for activity. In terms of biological role, dehydrogenase required for the biosynthesis of the B-band O antigen of serotype O6 lipopolysaccharide. Is also required for flagellin glycosylation. Catalyzes the conversion of UDP-N-acetylglucosamine (UDP-GlcNAc) to UDP-N-acetylglucosaminuronic acid (UDP-GlcNAcA). Can also catalyze the conversion of UDP-N-acetyl-galactosamine (UDP-GalNAc) to UDP-N-acetylgalactosaminuronic acid (UDP-GalNAcA), with low efficiency. Can use NAD(+) or NADP(+), with a preference for NAD(+). The sequence is that of UDP-N-acetyl-D-glucosamine 6-dehydrogenase from Pseudomonas aeruginosa.